The sequence spans 161 residues: Nucleotide-binding protein swp_1151 (161 aa).

It belongs to the YajQ family.

Its function is as follows. Nucleotide-binding protein. The polypeptide is Nucleotide-binding protein swp_1151 (Shewanella piezotolerans (strain WP3 / JCM 13877)).